Reading from the N-terminus, the 354-residue chain is Neutral protease 2 homolog AN7962 (354 aa).

Positions 1 to 19 (MKFIAPIALLGMFQAASAS) are cleaved as a signal peptide. Residues 20–178 (PVDIKTSNAG…GAQLSKLSKR (159 aa)) constitute a propeptide that is removed on maturation. Cystine bridges form between cysteine 184-cysteine 255 and cysteine 262-cysteine 280. Histidine 305 is a binding site for Zn(2+). Glutamate 306 is a catalytic residue. Positions 309 and 320 each coordinate Zn(2+).

Belongs to the peptidase M35 family. It depends on Zn(2+) as a cofactor.

It is found in the secreted. It catalyses the reaction Preferential cleavage of bonds with hydrophobic residues in P1'. Also 3-Asn-|-Gln-4 and 8-Gly-|-Ser-9 bonds in insulin B chain.. In terms of biological role, secreted metalloproteinase that allows assimilation of proteinaceous substrates. Shows high activities on basic nuclear substrates such as histone and protamine. In Emericella nidulans (strain FGSC A4 / ATCC 38163 / CBS 112.46 / NRRL 194 / M139) (Aspergillus nidulans), this protein is Neutral protease 2 homolog AN7962.